We begin with the raw amino-acid sequence, 184 residues long: UPF0301 protein RSKD131_2391 (184 aa).

The protein belongs to the UPF0301 (AlgH) family.

The sequence is that of UPF0301 protein RSKD131_2391 from Cereibacter sphaeroides (strain KD131 / KCTC 12085) (Rhodobacter sphaeroides).